A 68-amino-acid polypeptide reads, in one-letter code: Urocalcin (68 aa).

A signal peptide spans 1 to 27; it reads MKASTLVVIFIVIFITISSFSIHDVQA. Positions 28 to 35 are excised as a propeptide; sequence SGVEKREQ. Cystine bridges form between cysteine 38-cysteine 52, cysteine 45-cysteine 56, and cysteine 51-cysteine 67. Residues 57–59 form an essential for stimulation of [3H]ryanodine binding to RYR1 region; that stretch reads KRR.

This sequence belongs to the scorpion calcin family. In terms of tissue distribution, expressed by the venom gland.

Its subcellular location is the secreted. Functionally, this toxin only weakly stabilizes ryanodine receptor 1 (RyR1) opening in a long-lasting subconductance state (55% of the full conductance state obtained only at high concentrations (1 uM)). In addition, it has been shown to dose-dependently stimulate ryanodine binding to RyR1 with the lowest activity of all calcins (EC(50)=376 nM). It also augments the bell-shaped calcium-[3H]ryanodine binding curve that is maximal at about 10 uM calcium concentration. It binds a different site as ryanodine. It acts synergistically with caffeine. In contrast to other calcins, it does not trigger calcium release from sarcoplasmic vesicles even at high concentration (1 uM). In vivo, intracerebroventricular injection into mice induces neurotoxic symptoms, followed by death. In Urodacus yaschenkoi (Inland robust scorpion), this protein is Urocalcin.